The chain runs to 265 residues: Ni-sirohydrochlorin a,c-diamide reductive cyclase complex, component CfbC (265 aa).

Belongs to the NifH/BchL/ChlL family. As to quaternary structure, homodimer. The Ni-sirohydrochlorin a,c-diamide reductive cyclase complex is composed of a NifH homolog component CfbC and a NifD homolog component CfbD. [4Fe-4S] cluster serves as cofactor.

It carries out the reaction Ni-sirohydrochlorin a,c-diamide + 3 AH2 + ATP + H2O = 15,17(3)-seco-F430-17(3)-acid + 3 A + ADP + phosphate. In terms of biological role, involved in the biosynthesis of the unique nickel-containing tetrapyrrole coenzyme F430, the prosthetic group of methyl-coenzyme M reductase (MCR), which plays a key role in methanogenesis and anaerobic methane oxidation. Catalyzes both the six-electron reduction of the tetrahydroporphyrin ring system and the gamma-lactamization of the c-acetamide side chain of Ni-sirohydrochlorin a,c-diamide to yield 15,17(3)-seco-F430-17(3)-acid (seco-F430), the last intermediate in the biosynthesis of the coenzyme F430. This chain is Ni-sirohydrochlorin a,c-diamide reductive cyclase complex, component CfbC, found in Methanosarcina barkeri (strain Fusaro / DSM 804).